Reading from the N-terminus, the 2873-residue chain is WD repeat-containing protein 87 (2873 aa).

WD repeat units lie at residues 108-146 (PCRFNISCLCYDPEMKMLLSGILGAVVTWVIELGGTGLQ), 199-239 (TSSG…PLHS), 242-283 (AHQS…RRLE), 368-407 (SILDQAVDWAYDPGKEELFVATGSSEVLVFDTTRCPCPAK), 415-460 (NSQD…RLEK), 516-553 (LSSCHLTHLILLPKSVGAITETNCLRLWKFHDFLSSGS), and 565-604 (LHLCAITSFDVCLSLSLFVTGSADGSVRIWDFHGRLIGIL). Disordered stretches follow at residues 1049–1124 (FSLD…ESGT), 1177–1199 (DKRDKKATAQKLKKKHKKKGKEA), 1392–1413 (EKKTFQKSPKQGRKAVQKERKV), 1531–1607 (SKSK…QEER), and 2199–2338 (KRKE…EEVD). Basic residues-rich tracts occupy residues 1089–1101 (VKKHSQKWLRGLK) and 1187–1197 (KLKKKHKKKGK). The segment covering 1549–1574 (EVSREGEEKEQQVTEEQRHIQEEHKW) has biased composition (basic and acidic residues). Residues 1575–1586 (ARIHRKRARAEK) show a composition bias toward basic residues. Composition is skewed to basic and acidic residues over residues 1587–1607 (KRAQEERKLAQEEEKLAQEER) and 2204–2213 (KRGDKPKEKF). A compositionally biased stretch (acidic residues) spans 2244 to 2276 (SSEEEEEREEEEEREEEEEREEEEERKEEEEGE). The span at 2277 to 2287 (EKQVEKEEEEK) shows a compositional bias: basic and acidic residues. The span at 2304–2337 (EVFEEKEEIMSEEETESLSDEEEEEESCSLEEEV) shows a compositional bias: acidic residues.

In Homo sapiens (Human), this protein is WD repeat-containing protein 87 (WDR87).